Reading from the N-terminus, the 169-residue chain is MEVYIPSFRYEESDLERGYTVFKIEVLMNGRKHFVEKRYSEFHALHKKLKKCIKTPEIPSKHVRNWVPKVLEQRRQGLETYLQAVILENEELPKLFLDFLNVRHLPSLPKAESCGSFDETESEESSKLSHQPVLLFLRDPYVLPAASDFPNVVIEGVLHGIFYPHLQPR.

Residue M1 is modified to N-acetylmethionine. The PX domain occupies 1–125 (MEVYIPSFRY…SFDETESEES (125 aa)). A 1,2-diacyl-sn-glycero-3-phospho-(1D-myo-inositol-3-phosphate) contacts are provided by R38, S40, K61, and R74. S113 and S116 each carry phosphoserine.

The protein belongs to the sorting nexin family.

The protein localises to the cytoplasmic vesicle membrane. Its function is as follows. May be involved in several stages of intracellular trafficking. The chain is Sorting nexin-24 (SNX24) from Homo sapiens (Human).